The sequence spans 513 residues: Glycogen synthase (513 aa).

Lys-47 contacts ADP-alpha-D-glucose.

Belongs to the glycosyltransferase 1 family. Bacterial/plant glycogen synthase subfamily.

The enzyme catalyses [(1-&gt;4)-alpha-D-glucosyl](n) + ADP-alpha-D-glucose = [(1-&gt;4)-alpha-D-glucosyl](n+1) + ADP + H(+). The protein operates within glycan biosynthesis; glycogen biosynthesis. Functionally, synthesizes alpha-1,4-glucan chains using ADP-glucose. This Pseudomonas aeruginosa (strain ATCC 15692 / DSM 22644 / CIP 104116 / JCM 14847 / LMG 12228 / 1C / PRS 101 / PAO1) protein is Glycogen synthase.